The chain runs to 391 residues: Somatostatin receptor type 1 (391 aa).

The segment at 1–50 (MFPNGTASSPSSSPSPSPGSCGEGACSRGPGSGAADGMEEPGRNASQNGT) is disordered. The Extracellular segment spans residues 1-56 (MFPNGTASSPSSSPSPSPGSCGEGACSRGPGSGAADGMEEPGRNASQNGTLSEGQG). The N-linked (GlcNAc...) asparagine glycan is linked to Asn-4. The span at 8 to 20 (SSPSSSPSPSPGS) shows a compositional bias: low complexity. Asn-44 and Asn-48 each carry an N-linked (GlcNAc...) asparagine glycan. Residues 57 to 84 (SAILISFIYSVVCLVGLCGNSMVIYVIL) form a helical membrane-spanning segment. Residues 85–94 (RYAKMKTATN) lie on the Cytoplasmic side of the membrane. Residues 95 to 120 (IYILNLAIADELLMLSVPFLVTSTLL) form a helical membrane-spanning segment. At 121–131 (RHWPFGALLCR) the chain is on the extracellular side. Cys-130 and Cys-208 are oxidised to a cystine. The chain crosses the membrane as a helical span at residues 132–153 (LVLSVDAVNMFTSIYCLTVLSV). At 154-175 (DRYVAVVHPIKAARYRRPTVAK) the chain is on the cytoplasmic side. Residues 176–196 (VVNLGVWVLSLLVILPIVVFS) form a helical membrane-spanning segment. At 197–219 (RTAANSDGTVACNMLMPEPAQRW) the chain is on the extracellular side. Residues 220–244 (LVGFVLYTFLMGFLLPVGAICLCYV) traverse the membrane as a helical segment. Residues 245 to 270 (LIIAKMRMVALKAGWQQRKRSERKIT) lie on the Cytoplasmic side of the membrane. The chain crosses the membrane as a helical span at residues 271–296 (LMVMMVVMVFVICWMPFYVVQLVNVF). At 297-303 (AEQDDAT) the chain is on the extracellular side. A helical transmembrane segment spans residues 304-327 (VSQLSVILGYANSCANPILYGFLS). At 328 to 391 (DNFKRSFQRI…GTCASRISTL (64 aa)) the chain is on the cytoplasmic side. A lipid anchor (S-palmitoyl cysteine) is attached at Cys-339.

The protein belongs to the G-protein coupled receptor 1 family. In terms of tissue distribution, jejunum and stomach.

Its subcellular location is the cell membrane. Receptor for somatostatin with higher affinity for somatostatin-14 than -28. This receptor is coupled via pertussis toxin sensitive G proteins to inhibition of adenylyl cyclase. In addition it stimulates phosphotyrosine phosphatase and Na(+)/H(+) exchanger via pertussis toxin insensitive G proteins. The sequence is that of Somatostatin receptor type 1 (Sstr1) from Mus musculus (Mouse).